The chain runs to 207 residues: Probable molybdenum cofactor guanylyltransferase (207 aa).

GTP contacts are provided by residues 9–11 (LAG), Lys21, and Asp97. Asp97 contributes to the Mg(2+) binding site.

The protein belongs to the MobA family. It depends on Mg(2+) as a cofactor.

The protein localises to the cytoplasm. It catalyses the reaction Mo-molybdopterin + GTP + H(+) = Mo-molybdopterin guanine dinucleotide + diphosphate. Transfers a GMP moiety from GTP to Mo-molybdopterin (Mo-MPT) cofactor (Moco or molybdenum cofactor) to form Mo-molybdopterin guanine dinucleotide (Mo-MGD) cofactor. The chain is Probable molybdenum cofactor guanylyltransferase from Trichormus variabilis (strain ATCC 29413 / PCC 7937) (Anabaena variabilis).